A 148-amino-acid chain; its full sequence is UPF0134 protein MPN_410 (148 aa).

Belongs to the UPF0134 family.

The protein is UPF0134 protein MPN_410 of Mycoplasma pneumoniae (strain ATCC 29342 / M129 / Subtype 1) (Mycoplasmoides pneumoniae).